A 191-amino-acid polypeptide reads, in one-letter code: Pyridoxal 5'-phosphate synthase subunit PdxT (191 aa).

G48–S50 serves as a coordination point for L-glutamine. The active-site Nucleophile is C81. L-glutamine-binding positions include R109 and I136–R137. Residues H172 and E174 each act as charge relay system in the active site.

The protein belongs to the glutaminase PdxT/SNO family. In the presence of PdxS, forms a dodecamer of heterodimers. Only shows activity in the heterodimer.

The enzyme catalyses aldehydo-D-ribose 5-phosphate + D-glyceraldehyde 3-phosphate + L-glutamine = pyridoxal 5'-phosphate + L-glutamate + phosphate + 3 H2O + H(+). The catalysed reaction is L-glutamine + H2O = L-glutamate + NH4(+). Its pathway is cofactor biosynthesis; pyridoxal 5'-phosphate biosynthesis. In terms of biological role, catalyzes the hydrolysis of glutamine to glutamate and ammonia as part of the biosynthesis of pyridoxal 5'-phosphate. The resulting ammonia molecule is channeled to the active site of PdxS. The sequence is that of Pyridoxal 5'-phosphate synthase subunit PdxT from Thermus thermophilus (strain ATCC 27634 / DSM 579 / HB8).